We begin with the raw amino-acid sequence, 712 residues long: Protein SDA1 homolog (712 aa).

T234 is modified (phosphothreonine). S236 is subject to Phosphoserine. 2 disordered regions span residues 488–573 (TIDI…DMRI) and 662–712 (VNEH…KKMK). Acidic residues-rich tracts occupy residues 491-501 (IESEDDTDSND) and 516-559 (GADD…ESGE). The span at 560–572 (ESAKAKKEKKDMR) shows a compositional bias: basic and acidic residues. Basic residues-rich tracts occupy residues 671 to 692 (REKRKTKNFGMLRHKARSKVKK) and 700 to 712 (ALRKHLLHQKKMK).

Belongs to the SDA1 family.

Its subcellular location is the nucleus. The protein localises to the nucleolus. Its function is as follows. Required for 60S pre-ribosomal subunits export to the cytoplasm. The chain is Protein SDA1 homolog (Mys45A) from Drosophila melanogaster (Fruit fly).